The primary structure comprises 400 residues: Elongation factor Tu 2 (400 aa).

The 200-residue stretch at 10–209 folds into the tr-type G domain; the sequence is KPHVNIGTIG…KVDEYIPTPQ (200 aa). Positions 19-26 are G1; sequence GHVDHGKT. 19–26 contributes to the GTP binding site; it reads GHVDHGKT. T26 contributes to the Mg(2+) binding site. The segment at 60–64 is G2; sequence GITIN. Positions 81–84 are G3; sequence DCPG. Residues 81–85 and 136–139 each bind GTP; these read DCPGH and NKAD. The interval 136–139 is G4; that stretch reads NKAD. Residues 174–176 form a G5 region; it reads SAL.

It belongs to the TRAFAC class translation factor GTPase superfamily. Classic translation factor GTPase family. EF-Tu/EF-1A subfamily. As to quaternary structure, monomer.

It is found in the cytoplasm. It catalyses the reaction GTP + H2O = GDP + phosphate + H(+). GTP hydrolase that promotes the GTP-dependent binding of aminoacyl-tRNA to the A-site of ribosomes during protein biosynthesis. The protein is Elongation factor Tu 2 of Carboxydothermus hydrogenoformans (strain ATCC BAA-161 / DSM 6008 / Z-2901).